The chain runs to 60 residues: LKCNQLIPPFWKTCPKGKNLCYKMTMRGASKVPVKRGCIDVCPKSSLLIKYMCCNTDKCN.

4 disulfide bridges follow: Cys-3–Cys-21, Cys-14–Cys-38, Cys-42–Cys-53, and Cys-54–Cys-59.

It belongs to the three-finger toxin family. Short-chain subfamily. Type IA cytotoxin sub-subfamily. In terms of assembly, monomer in solution; Homodimer and oligomer in the presence of negatively charged lipids forming a pore with a size ranging between 20 and 30 Angstroms. Expressed by the venom gland.

Its subcellular location is the secreted. The protein resides in the target cell membrane. In terms of biological role, shows cytolytic activity on many different cells by forming pore in lipid membranes. In vivo, increases heart rate or kills the animal by cardiac arrest. In addition, it binds to heparin with high affinity, interacts with Kv channel-interacting protein 1 (KCNIP1) in a calcium-independent manner, and binds to integrin alpha-V/beta-3 (ITGAV/ITGB3) with moderate affinity. The polypeptide is Cytotoxin 2 (Naja mossambica (Mozambique spitting cobra)).